The sequence spans 125 residues: Small ribosomal subunit protein uS13 (125 aa).

Positions 93–125 are disordered; that stretch reads RRGLPVRGQRTKTNARTRKGPKRTVAGKKKAGR.

Belongs to the universal ribosomal protein uS13 family. In terms of assembly, part of the 30S ribosomal subunit. Forms a loose heterodimer with protein S19. Forms two bridges to the 50S subunit in the 70S ribosome.

Functionally, located at the top of the head of the 30S subunit, it contacts several helices of the 16S rRNA. In the 70S ribosome it contacts the 23S rRNA (bridge B1a) and protein L5 of the 50S subunit (bridge B1b), connecting the 2 subunits; these bridges are implicated in subunit movement. Contacts the tRNAs in the A and P-sites. The polypeptide is Small ribosomal subunit protein uS13 (Renibacterium salmoninarum (strain ATCC 33209 / DSM 20767 / JCM 11484 / NBRC 15589 / NCIMB 2235)).